The primary structure comprises 172 residues: MPLLDSFTVDHTRMEAPAVRVAKTMQTPKGDTITVFDLRFTAPNKDILSEKGIHTLEHLYAGFMRNHLNGSGVEIIDISPMGCRTGFYMSLIGTPAEQAVADAWVSSMEDVLKVEAQNKIPELNEYQCGTYEMHSLDEAKAIATTVLASGISVNKNDELALSDSMLKELSNH.

Residues His-54, His-58, and Cys-128 each coordinate Fe cation.

It belongs to the LuxS family. In terms of assembly, homodimer. Fe cation serves as cofactor.

The enzyme catalyses S-(5-deoxy-D-ribos-5-yl)-L-homocysteine = (S)-4,5-dihydroxypentane-2,3-dione + L-homocysteine. In terms of biological role, involved in the synthesis of autoinducer 2 (AI-2) which is secreted by bacteria and is used to communicate both the cell density and the metabolic potential of the environment. The regulation of gene expression in response to changes in cell density is called quorum sensing. Catalyzes the transformation of S-ribosylhomocysteine (RHC) to homocysteine (HC) and 4,5-dihydroxy-2,3-pentadione (DPD). The sequence is that of S-ribosylhomocysteine lyase from Aliivibrio fischeri (strain MJ11) (Vibrio fischeri).